Reading from the N-terminus, the 74-residue chain is Ribosome modulation factor (74 aa).

The protein belongs to the ribosome modulation factor family.

It is found in the cytoplasm. In terms of biological role, during stationary phase, converts 70S ribosomes to an inactive dimeric form (100S ribosomes). The sequence is that of Ribosome modulation factor from Cellvibrio japonicus (strain Ueda107) (Pseudomonas fluorescens subsp. cellulosa).